The following is a 64-amino-acid chain: Temporin-ALh (64 aa).

Residues 1–22 (MFPLKKSLLLLFFLATINLSLC) form the signal peptide. Positions 23-46 (EQERNAEEERRDEPDERNAEVEKR) are excised as a propeptide. The residue at position 62 (Ser-62) is a Serine amide.

The protein belongs to the frog skin active peptide (FSAP) family. Temporin subfamily. As to expression, expressed by the skin glands.

Its subcellular location is the secreted. In terms of biological role, antimicrobial peptide with activity against Gram-positive and Gram-negative bacteria and against fungi. Has been tested against S.aureus (MIC=2.5 ug/mL), B.pumilus (MIC=7.5 ug/mL), B.cereus (MIC=75.0 ug/mL), E.coli (MIC=5.0 ug/mL), B.dysenteriae (MIC=20.0 ug/mL), A.cacoaceticus (MIC=60.0 ug/mL), P.aeruginosa (MIC=2.5 ug/mL) and C.albicans (MIC=2.5 ug/mL). Also shows a weak hemolytic activity. This Amolops loloensis (Lolokou Sucker Frog) protein is Temporin-ALh.